We begin with the raw amino-acid sequence, 304 residues long: Protease HtpX homolog (304 aa).

2 helical membrane passes run 14 to 34 and 39 to 59; these read VFII…IGII and YLNG…IMVM. His-144 lines the Zn(2+) pocket. The active site involves Glu-145. Zn(2+) is bound at residue His-148. 2 helical membrane-spanning segments follow: residues 159 to 179 and 202 to 222; these read IAIA…RLIF and IIIY…ATAI. Glu-231 contributes to the Zn(2+) binding site. The tract at residues 275-304 is disordered; that stretch reads SSPLKSKKDKPGLFDSHPPISSRIERLENM.

The protein belongs to the peptidase M48B family. The cofactor is Zn(2+).

It is found in the cell membrane. This chain is Protease HtpX homolog, found in Listeria innocua serovar 6a (strain ATCC BAA-680 / CLIP 11262).